A 322-amino-acid chain; its full sequence is Phospholipase A1 (322 aa).

The first 18 residues, 1-18 (MNFKYSILFICFGTLDRG), serve as a signal peptide directing secretion. Cys23 and Cys106 are joined by a disulfide. The active-site Nucleophile is the Ser156. Catalysis depends on Asp184, which acts as the Charge relay system. Cystine bridges form between Cys195/Cys200 and Cys238/Cys246. Catalysis depends on His248, which acts as the Charge relay system. Intrachain disulfides connect Cys263-Cys290, Cys264-Cys315, and Cys283-Cys288.

Belongs to the AB hydrolase superfamily. Lipase family. In terms of processing, contains six disulfide bonds. Is not glycosylated. Expressed by the venom gland.

It localises to the secreted. The enzyme catalyses a 1,2-diacyl-sn-glycero-3-phosphocholine + H2O = a 2-acyl-sn-glycero-3-phosphocholine + a fatty acid + H(+). In terms of biological role, catalyzes the hydrolysis of phosphatidylcholine with phospholipase A1 activity. Shows hemolytic activity. Acts as an allergen. This chain is Phospholipase A1, found in Polybia paulista (Neotropical social wasp).